Here is a 267-residue protein sequence, read N- to C-terminus: Protein BMH1 (267 aa).

Ser2 is modified (N-acetylserine). Lys76 is covalently cross-linked (Glycyl lysine isopeptide (Lys-Gly) (interchain with G-Cter in ubiquitin)). A Phosphoserine modification is found at Ser89. The disordered stretch occupies residues 236 to 267 (DMSESGQAEDQQQQQQHQQQQPPAAAEGEAPK). The segment covering 243 to 267 (AEDQQQQQQHQQQQPPAAAEGEAPK) has biased composition (low complexity).

The protein belongs to the 14-3-3 family. In terms of assembly, homodimer. Interacts with NTH1 (via N-terminus when phosphorylated by PKA); the interaction is direct and activates NTH1. Interacts with FIN1.

Functionally, involved in growth regulation. The protein is Protein BMH1 (BMH1) of Saccharomyces cerevisiae (strain ATCC 204508 / S288c) (Baker's yeast).